The following is a 312-amino-acid chain: Regulation of nuclear pre-mRNA domain-containing protein 1A (312 aa).

S2 is modified (N-acetylserine). The CID domain maps to 2–133 (SAFSEAALEK…QLKQALYGDK (132 aa)). 3 positions are modified to phosphoserine: S153, S156, and S285. Residues 244-286 (LADFLRCQKEALAEKEHKLEEYKRKLARVSLVRKELRSRIQSL) are a coiled coil.

It belongs to the UPF0400 (RTT103) family. May form a heterodimer with RPRD1B. Associates with the RNA polymerase II subunit POLR2A (via CTD phosphorylated at 'Ser-2' and 'Ser-7' of the heptad repeats).

It localises to the nucleus. Functionally, interacts with phosphorylated C-terminal heptapeptide repeat domain (CTD) of the largest RNA polymerase II subunit POLR2A, and participates in dephosphorylation of the CTD by RPAP2. May act as a negative regulator of cyclin-D1 (CCND1) and cyclin-E (CCNE1) in the cell cycle. The protein is Regulation of nuclear pre-mRNA domain-containing protein 1A (RPRD1A) of Pongo abelii (Sumatran orangutan).